The sequence spans 321 residues: Anthranilate phosphoribosyltransferase (321 aa).

Residues Gly72, 75 to 76, Thr80, 82 to 85, 99 to 107, and Ser111 each bind 5-phospho-alpha-D-ribose 1-diphosphate; these read GD, NVST, and KHGNVSITS. Residue Gly72 coordinates anthranilate. Mg(2+) is bound at residue Ser84. Position 102 (Asn102) interacts with anthranilate. Arg157 lines the anthranilate pocket. Positions 216 and 217 each coordinate Mg(2+).

This sequence belongs to the anthranilate phosphoribosyltransferase family. Homodimer. Mg(2+) is required as a cofactor.

The enzyme catalyses N-(5-phospho-beta-D-ribosyl)anthranilate + diphosphate = 5-phospho-alpha-D-ribose 1-diphosphate + anthranilate. Its pathway is amino-acid biosynthesis; L-tryptophan biosynthesis; L-tryptophan from chorismate: step 2/5. Functionally, catalyzes the transfer of the phosphoribosyl group of 5-phosphorylribose-1-pyrophosphate (PRPP) to anthranilate to yield N-(5'-phosphoribosyl)-anthranilate (PRA). This chain is Anthranilate phosphoribosyltransferase, found in Methanococcus maripaludis (strain C7 / ATCC BAA-1331).